A 349-amino-acid polypeptide reads, in one-letter code: Sensory histidine kinase/phosphatase NtrB (349 aa).

One can recognise a PAS domain in the interval 5–78 (TQPDAGQILN…SLEAGQGFTD (74 aa)). A Histidine kinase domain is found at 136 to 349 (GLAHEIKNPL…EFSVYLPIRK (214 aa)). A Phosphohistidine; by autocatalysis modification is found at His-139. An ATP-binding site is contributed by Lys-329.

In terms of processing, autophosphorylated.

Its subcellular location is the cytoplasm. It catalyses the reaction ATP + protein L-histidine = ADP + protein N-phospho-L-histidine.. Its function is as follows. Member of the two-component regulatory system NtrB/NtrC, which controls expression of the nitrogen-regulated (ntr) genes in response to nitrogen limitation. Under conditions of nitrogen limitation, NtrB autophosphorylates and transfers the phosphoryl group to NtrC. In the presence of nitrogen, acts as a phosphatase that dephosphorylates and inactivates NtrC. This chain is Sensory histidine kinase/phosphatase NtrB (glnL), found in Escherichia coli O157:H7.